The primary structure comprises 321 residues: Glutaminase (321 aa).

Substrate-binding residues include serine 69, asparagine 120, glutamate 165, asparagine 172, tyrosine 196, tyrosine 248, and valine 266.

It belongs to the glutaminase family. As to quaternary structure, homotetramer.

The catalysed reaction is L-glutamine + H2O = L-glutamate + NH4(+). The sequence is that of Glutaminase from Bacteroides fragilis (strain YCH46).